Here is a 445-residue protein sequence, read N- to C-terminus: tRNA modification GTPase MnmE (445 aa).

The (6S)-5-formyl-5,6,7,8-tetrahydrofolate site is built by Arg-20, Glu-79, and Lys-119. Residues 215–371 (GLKLAIIGPP…ILKNIENIAE (157 aa)) form the TrmE-type G domain. Asn-225 is a binding site for K(+). Residues 225-230 (NTGKSS), 244-250 (SNIAGTT), and 269-272 (DTAG) contribute to the GTP site. A Mg(2+)-binding site is contributed by Ser-229. Positions 244, 246, and 249 each coordinate K(+). A Mg(2+)-binding site is contributed by Thr-250. Lys-445 provides a ligand contact to (6S)-5-formyl-5,6,7,8-tetrahydrofolate.

The protein belongs to the TRAFAC class TrmE-Era-EngA-EngB-Septin-like GTPase superfamily. TrmE GTPase family. Homodimer. Heterotetramer of two MnmE and two MnmG subunits. Requires K(+) as cofactor.

The protein localises to the cytoplasm. In terms of biological role, exhibits a very high intrinsic GTPase hydrolysis rate. Involved in the addition of a carboxymethylaminomethyl (cmnm) group at the wobble position (U34) of certain tRNAs, forming tRNA-cmnm(5)s(2)U34. The protein is tRNA modification GTPase MnmE of Rickettsia typhi (strain ATCC VR-144 / Wilmington).